Here is a 375-residue protein sequence, read N- to C-terminus: MKAILALEDGTLFHGHTFTGEGSAGGEVIFNTGMTGYQEVLTDPSYTGQMVCMTYPHVGNYGINPEDIESAHIRVAGFIVKECCKEPSNWRSTMTLPEYLTSQGITGIEGIDTRALTRHLRLHGAMRGYISTDVSDPQRVVGLAKGLPSMEGLGLADRVCCDAPFTWSGTAMEPAKIVDGTYAWPGTGPRLVVFDMGIKWNILRLLTAQGFDMLVVPYTTTAEQVRKLGPDAVFLSPGPGDPAALTDLVHTTSLLVNEYPLAGICLGHQLLGLALGGRTFKLKFGHHGLNHPVKDLQTGRIEISSQNHGFCVDIESLSDVELTHVNLNDNTLEGFAHKKKPVIAIQYHPEAAPGPHDSRYFFSRFRNLVRKETGK.

Residues 1–186 (MKAILALEDG…IVDGTYAWPG (186 aa)) are CPSase. Residues Ser-45, Gly-238, and Gly-240 each contribute to the L-glutamine site. A Glutamine amidotransferase type-1 domain is found at 190–375 (RLVVFDMGIK…RNLVRKETGK (186 aa)). Cys-265 acts as the Nucleophile in catalysis. Residues Leu-266, Gln-269, Asn-307, Gly-309, and Phe-310 each coordinate L-glutamine. Active-site residues include His-348 and Glu-350.

This sequence belongs to the CarA family. As to quaternary structure, composed of two chains; the small (or glutamine) chain promotes the hydrolysis of glutamine to ammonia, which is used by the large (or ammonia) chain to synthesize carbamoyl phosphate. Tetramer of heterodimers (alpha,beta)4.

The enzyme catalyses hydrogencarbonate + L-glutamine + 2 ATP + H2O = carbamoyl phosphate + L-glutamate + 2 ADP + phosphate + 2 H(+). It carries out the reaction L-glutamine + H2O = L-glutamate + NH4(+). The protein operates within amino-acid biosynthesis; L-arginine biosynthesis; carbamoyl phosphate from bicarbonate: step 1/1. Its pathway is pyrimidine metabolism; UMP biosynthesis via de novo pathway; (S)-dihydroorotate from bicarbonate: step 1/3. Small subunit of the glutamine-dependent carbamoyl phosphate synthetase (CPSase). CPSase catalyzes the formation of carbamoyl phosphate from the ammonia moiety of glutamine, carbonate, and phosphate donated by ATP, constituting the first step of 2 biosynthetic pathways, one leading to arginine and/or urea and the other to pyrimidine nucleotides. The small subunit (glutamine amidotransferase) binds and cleaves glutamine to supply the large subunit with the substrate ammonia. In Solidesulfovibrio magneticus (strain ATCC 700980 / DSM 13731 / RS-1) (Desulfovibrio magneticus), this protein is Carbamoyl phosphate synthase small chain.